The primary structure comprises 95 residues: Co-chaperonin GroES (95 aa).

It belongs to the GroES chaperonin family. As to quaternary structure, heptamer of 7 subunits arranged in a ring. Interacts with the chaperonin GroEL.

It is found in the cytoplasm. Functionally, together with the chaperonin GroEL, plays an essential role in assisting protein folding. The GroEL-GroES system forms a nano-cage that allows encapsulation of the non-native substrate proteins and provides a physical environment optimized to promote and accelerate protein folding. GroES binds to the apical surface of the GroEL ring, thereby capping the opening of the GroEL channel. The polypeptide is Co-chaperonin GroES (Caldicellulosiruptor bescii (strain ATCC BAA-1888 / DSM 6725 / KCTC 15123 / Z-1320) (Anaerocellum thermophilum)).